The primary structure comprises 360 residues: Holliday junction branch migration complex subunit RuvB (360 aa).

The segment at 1–23 is disordered; that stretch reads MIASVGDSRYYPKSVANGEKSDQ. Residues 12–204 form a large ATPase domain (RuvB-L) region; it reads PKSVANGEKS…FGIVLRLEFY (193 aa). Residues L43, R44, G85, K88, T89, T90, 151–153, R194, Y204, and R241 each bind ATP; that span reads EDY. Residue T89 participates in Mg(2+) binding. Positions 205–275 are small ATPAse domain (RuvB-S); sequence TTEDLKIILK…TAQKALEMLE (71 aa). Residues 278 to 360 form a head domain (RuvB-H) region; sequence QHGFDEVDRR…KPPKKQDSLF (83 aa). 2 residues coordinate DNA: R333 and R338.

Belongs to the RuvB family. In terms of assembly, homohexamer. Forms an RuvA(8)-RuvB(12)-Holliday junction (HJ) complex. HJ DNA is sandwiched between 2 RuvA tetramers; dsDNA enters through RuvA and exits via RuvB. An RuvB hexamer assembles on each DNA strand where it exits the tetramer. Each RuvB hexamer is contacted by two RuvA subunits (via domain III) on 2 adjacent RuvB subunits; this complex drives branch migration. In the full resolvosome a probable DNA-RuvA(4)-RuvB(12)-RuvC(2) complex forms which resolves the HJ.

The protein localises to the cytoplasm. It catalyses the reaction ATP + H2O = ADP + phosphate + H(+). In terms of biological role, the RuvA-RuvB-RuvC complex processes Holliday junction (HJ) DNA during genetic recombination and DNA repair, while the RuvA-RuvB complex plays an important role in the rescue of blocked DNA replication forks via replication fork reversal (RFR). RuvA specifically binds to HJ cruciform DNA, conferring on it an open structure. The RuvB hexamer acts as an ATP-dependent pump, pulling dsDNA into and through the RuvAB complex. RuvB forms 2 homohexamers on either side of HJ DNA bound by 1 or 2 RuvA tetramers; 4 subunits per hexamer contact DNA at a time. Coordinated motions by a converter formed by DNA-disengaged RuvB subunits stimulates ATP hydrolysis and nucleotide exchange. Immobilization of the converter enables RuvB to convert the ATP-contained energy into a lever motion, pulling 2 nucleotides of DNA out of the RuvA tetramer per ATP hydrolyzed, thus driving DNA branch migration. The RuvB motors rotate together with the DNA substrate, which together with the progressing nucleotide cycle form the mechanistic basis for DNA recombination by continuous HJ branch migration. Branch migration allows RuvC to scan DNA until it finds its consensus sequence, where it cleaves and resolves cruciform DNA. The protein is Holliday junction branch migration complex subunit RuvB of Koribacter versatilis (strain Ellin345).